A 361-amino-acid chain; its full sequence is NAD(P)H-quinone oxidoreductase subunit 1, chloroplastic (361 aa).

Helical transmembrane passes span 28–48, 99–119, 128–148, 249–269, 270–290, 301–321, and 341–361; these read IWVL…VLVI, FTIG…VIPF, LSIG…GLLM, YSGI…LVSS, LFVT…LFVP, TIIC…ISIA, and FLLP…LLSL.

It belongs to the complex I subunit 1 family. As to quaternary structure, NDH is composed of at least 16 different subunits, 5 of which are encoded in the nucleus.

The protein localises to the plastid. It is found in the chloroplast thylakoid membrane. It carries out the reaction a plastoquinone + NADH + (n+1) H(+)(in) = a plastoquinol + NAD(+) + n H(+)(out). It catalyses the reaction a plastoquinone + NADPH + (n+1) H(+)(in) = a plastoquinol + NADP(+) + n H(+)(out). In terms of biological role, NDH shuttles electrons from NAD(P)H:plastoquinone, via FMN and iron-sulfur (Fe-S) centers, to quinones in the photosynthetic chain and possibly in a chloroplast respiratory chain. The immediate electron acceptor for the enzyme in this species is believed to be plastoquinone. Couples the redox reaction to proton translocation, and thus conserves the redox energy in a proton gradient. The sequence is that of NAD(P)H-quinone oxidoreductase subunit 1, chloroplastic from Jasminum nudiflorum (Winter jasmine).